The chain runs to 247 residues: 1-(5-phosphoribosyl)-5-[(5-phosphoribosylamino)methylideneamino] imidazole-4-carboxamide isomerase (247 aa).

The active-site Proton acceptor is D8. D131 (proton donor) is an active-site residue.

Belongs to the HisA/HisF family.

It localises to the cytoplasm. It catalyses the reaction 1-(5-phospho-beta-D-ribosyl)-5-[(5-phospho-beta-D-ribosylamino)methylideneamino]imidazole-4-carboxamide = 5-[(5-phospho-1-deoxy-D-ribulos-1-ylimino)methylamino]-1-(5-phospho-beta-D-ribosyl)imidazole-4-carboxamide. Its pathway is amino-acid biosynthesis; L-histidine biosynthesis; L-histidine from 5-phospho-alpha-D-ribose 1-diphosphate: step 4/9. This is 1-(5-phosphoribosyl)-5-[(5-phosphoribosylamino)methylideneamino] imidazole-4-carboxamide isomerase from Cupriavidus metallidurans (strain ATCC 43123 / DSM 2839 / NBRC 102507 / CH34) (Ralstonia metallidurans).